The chain runs to 159 residues: Transcriptional repressor NrdR (159 aa).

The segment at 1–26 (MRCPFCAHDNSQVKDSRPSEDNTSIR) is disordered. Residues 3 to 34 (CPFCAHDNSQVKDSRPSEDNTSIRRRRQCEGC) fold into a zinc finger. The span at 11–24 (SQVKDSRPSEDNTS) shows a compositional bias: basic and acidic residues. Positions 49–139 (VVVVKSGERR…VYRDFTEARD (91 aa)) constitute an ATP-cone domain.

This sequence belongs to the NrdR family. It depends on Zn(2+) as a cofactor.

Functionally, negatively regulates transcription of bacterial ribonucleotide reductase nrd genes and operons by binding to NrdR-boxes. The polypeptide is Transcriptional repressor NrdR (Novosphingobium aromaticivorans (strain ATCC 700278 / DSM 12444 / CCUG 56034 / CIP 105152 / NBRC 16084 / F199)).